A 619-amino-acid polypeptide reads, in one-letter code: Teichoic acid poly(ribitol-phosphate) polymerase (619 aa).

The protein belongs to the CDP-glycerol glycerophosphotransferase family.

The protein resides in the cell membrane. It carries out the reaction 4-O-[1-D-ribitylphospho-(2R)-1-glycerylphospho]-N-acetyl-beta-D-mannosaminyl-(1-&gt;4)-N-acetyl-alpha-D-glucosaminyl di-trans,octa-cis-undecaprenyl diphosphate + n CDP-L-ribitol = 4-O-[(D-ribitylphospho)(n)-D-ribitylphospho-(2R)-glycerylphospho]-N-acetyl-beta-D-mannosaminyl-(1-&gt;4)-N-acetyl-alpha-D-glucosaminyl di-trans,octa-cis-undecaprenyl diphosphate + n CMP + n H(+). It participates in cell wall biogenesis; poly(ribitol phosphate) teichoic acid biosynthesis. Responsible for the polymerization of the main chain of the major teichoic acid by sequential transfer of ribitol phosphate units from CDP-ribitol to the glycerol phosphate attached to the disaccharide linkage unit. Synthesizes polymers of up to 40 ribitol phosphate units in length. This chain is Teichoic acid poly(ribitol-phosphate) polymerase (tarL), found in Bacillus spizizenii (strain ATCC 23059 / NRRL B-14472 / W23) (Bacillus subtilis subsp. spizizenii).